Consider the following 734-residue polypeptide: Photosystem I P700 chlorophyll a apoprotein A2 (734 aa).

Helical transmembrane passes span 46–69 (IFASHFGQLAIIFLWTSGNLFHVA), 135–158 (LYTGALFLLFLSAISLIAGWLHLQ), 175–199 (LNHHLSGLFGVSSLAWTGHLVHVAI), 273–291 (IAHHHLAIAFVFLVAGHMY), 330–353 (IHFQLGLALASLGVITSLVAQHMY), 369–395 (AALYTHHQYIAGFIMTGAFAHGAIFFI), 417–439 (AIKSHLSWASLFLGFHTLGLYVH), and 517–535 (FLVHHAIALGLHTTTLILV). Cysteine 559 and cysteine 568 together coordinate [4Fe-4S] cluster. The next 2 helical transmembrane spans lie at 575 to 596 (AFYLAVFWMLNTIGWVTFYWHW) and 643 to 665 (LSVWAWMFLFGHLVWATGFMFLI). Residues histidine 654, methionine 662, and tyrosine 670 each coordinate chlorophyll a. Tryptophan 671 serves as a coordination point for phylloquinone. Residues 707–727 (LVGLAHFSVGYIFTYAAFLIA) form a helical membrane-spanning segment.

Belongs to the PsaA/PsaB family. As to quaternary structure, the PsaA/B heterodimer binds the P700 chlorophyll special pair and subsequent electron acceptors. PSI consists of a core antenna complex that captures photons, and an electron transfer chain that converts photonic excitation into a charge separation. The eukaryotic PSI reaction center is composed of at least 11 subunits. P700 is a chlorophyll a/chlorophyll a' dimer, A0 is one or more chlorophyll a, A1 is one or both phylloquinones and FX is a shared 4Fe-4S iron-sulfur center. is required as a cofactor.

The protein localises to the plastid. The protein resides in the chloroplast thylakoid membrane. The catalysed reaction is reduced [plastocyanin] + hnu + oxidized [2Fe-2S]-[ferredoxin] = oxidized [plastocyanin] + reduced [2Fe-2S]-[ferredoxin]. Functionally, psaA and PsaB bind P700, the primary electron donor of photosystem I (PSI), as well as the electron acceptors A0, A1 and FX. PSI is a plastocyanin-ferredoxin oxidoreductase, converting photonic excitation into a charge separation, which transfers an electron from the donor P700 chlorophyll pair to the spectroscopically characterized acceptors A0, A1, FX, FA and FB in turn. Oxidized P700 is reduced on the lumenal side of the thylakoid membrane by plastocyanin. The chain is Photosystem I P700 chlorophyll a apoprotein A2 from Amborella trichopoda.